Here is a 607-residue protein sequence, read N- to C-terminus: Thymidine kinase (607 aa).

Disordered regions lie at residues M1 to T160 and D180 to L215. Basic and acidic residues predominate over residues K17–F32. Composition is skewed to polar residues over residues A88–P106, R148–T160, and R194–K203. Residue G291–T298 participates in ATP binding. E317 (proton acceptor) is an active-site residue. A substrate-binding site is contributed by Q355. R445 contributes to the ATP binding site. R451 contributes to the substrate binding site.

The protein belongs to the herpesviridae thymidine kinase family. As to quaternary structure, homodimer.

Its subcellular location is the virion tegument. The protein localises to the host nucleus. The enzyme catalyses thymidine + ATP = dTMP + ADP + H(+). Its function is as follows. Catalyzes the transfer of the gamma-phospho group of ATP to thymidine to generate dTMP in the salvage pathway of pyrimidine synthesis. The dTMP serves as a substrate for DNA polymerase during viral DNA replication. Allows the virus to be reactivated and to grow in non-proliferative cells lacking a high concentration of phosphorylated nucleic acid precursors. The chain is Thymidine kinase from Epstein-Barr virus (strain AG876) (HHV-4).